We begin with the raw amino-acid sequence, 791 residues long: DNA repair and recombination protein RAD54-like (791 aa).

Residues 1-20 show a composition bias toward polar residues; the sequence is MRRSLAPSQRIGQSTASRNA. The tract at residues 1 to 53 is disordered; sequence MRRSLAPSQRIGQSTASRNAFTPPLLQKKNKRACQKDLRLDTDADEDKERKRF. A required for chromatin remodeling, strand pairing activities and coupling of ATPase activity region spans residues 2 to 9; sequence RRSLAPSQ. Threonine 22 carries the phosphothreonine modification. Residues 34 to 53 show a composition bias toward basic and acidic residues; that stretch reads CQKDLRLDTDADEDKERKRF. In terms of domain architecture, Helicase ATP-binding spans 175-349; it reads EGKKGDFNGC…FSLVNFVNPE (175 aa). 188–195 contacts ATP; the sequence is DEMGLGKT. The DEGH box signature appears at 300–303; sequence DEGH. The region spanning 506–663 is the Helicase C-terminal domain; it reads LLDFMLAAIR…NNESSEKHFT (158 aa). Residues 747-791 form a disordered region; it reads KEVVESPESAAAEAESVEEESQPTQRKRPSPPLSDDSADEDFIGF. The segment covering 782–791 has biased composition (acidic residues); the sequence is DSADEDFIGF.

Belongs to the SNF2/RAD54 helicase family. Interacts (via N-terminus) with spn-A/Rad51.

Its subcellular location is the nucleus. In terms of biological role, involved in mitotic DNA repair and meiotic recombination. Functions in the recombinational DNA repair pathway. Essential for interhomolog gene conversion (GC), but may have a less important role in intersister GC than spn-A/Rad51. In the presence of DNA, spn-A/Rad51 enhances the ATPase activity of okr/Rad54. The polypeptide is DNA repair and recombination protein RAD54-like (Drosophila ananassae (Fruit fly)).